A 391-amino-acid polypeptide reads, in one-letter code: RAB6A-GEF complex partner protein 2 (391 aa).

Belongs to the RGP1 family. Forms a complex with RIC1; the interaction enhances RAB6A GTPase activity. Interacts with RIC1. Interacts with RAB6A; the interaction is direct with a preference for RAB6A-GDP. Interacts with RAB33B.

Its subcellular location is the cytoplasm. It is found in the cytosol. The protein resides in the membrane. In terms of biological role, the RIC1-RGP1 complex acts as a guanine nucleotide exchange factor (GEF), which activates RAB6A by exchanging bound GDP for free GTP and may thereby required for efficient fusion of endosome-derived vesicles with the Golgi compartment. The RIC1-RGP1 complex participates in the recycling of mannose-6-phosphate receptors. The sequence is that of RAB6A-GEF complex partner protein 2 from Homo sapiens (Human).